Consider the following 105-residue polypeptide: Large ribosomal subunit protein eL36 (105 aa).

The protein belongs to the eukaryotic ribosomal protein eL36 family. Component of the large ribosomal subunit.

It localises to the cytoplasm. It is found in the cytosol. Functionally, component of the large ribosomal subunit. The ribosome is a large ribonucleoprotein complex responsible for the synthesis of proteins in the cell. This Xenopus laevis (African clawed frog) protein is Large ribosomal subunit protein eL36 (rpl36).